The sequence spans 929 residues: Isoleucine--tRNA ligase (929 aa).

The 'HIGH' region motif lies at 58 to 68; it reads PYANGDIHIGH. An L-isoleucyl-5'-AMP-binding site is contributed by Glu563. Positions 605 to 609 match the 'KMSKS' region motif; the sequence is KMSKS. Position 608 (Lys608) interacts with ATP. Zn(2+) is bound by residues Cys892, Cys895, Cys912, and Cys915.

This sequence belongs to the class-I aminoacyl-tRNA synthetase family. IleS type 1 subfamily. In terms of assembly, monomer. Requires Zn(2+) as cofactor.

It is found in the cytoplasm. The catalysed reaction is tRNA(Ile) + L-isoleucine + ATP = L-isoleucyl-tRNA(Ile) + AMP + diphosphate. Catalyzes the attachment of isoleucine to tRNA(Ile). As IleRS can inadvertently accommodate and process structurally similar amino acids such as valine, to avoid such errors it has two additional distinct tRNA(Ile)-dependent editing activities. One activity is designated as 'pretransfer' editing and involves the hydrolysis of activated Val-AMP. The other activity is designated 'posttransfer' editing and involves deacylation of mischarged Val-tRNA(Ile). The protein is Isoleucine--tRNA ligase of Neisseria gonorrhoeae (strain ATCC 700825 / FA 1090).